Reading from the N-terminus, the 149-residue chain is MATNTNVSRVQEDGRKVKRSVYHRMRKEKEASEPIVEARAVTKYVRISPRKARSMANSIRNKDISEALQILTFSPKKSARILYKTLMSAIANAENNFGLNAENLYVSEIMVNEGPRLKRLWPRSHGRADILQKRMSHIYITVRDKSADK.

Belongs to the universal ribosomal protein uL22 family. In terms of assembly, part of the 50S ribosomal subunit.

In terms of biological role, this protein binds specifically to 23S rRNA; its binding is stimulated by other ribosomal proteins, e.g. L4, L17, and L20. It is important during the early stages of 50S assembly. It makes multiple contacts with different domains of the 23S rRNA in the assembled 50S subunit and ribosome. Its function is as follows. The globular domain of the protein is located near the polypeptide exit tunnel on the outside of the subunit, while an extended beta-hairpin is found that lines the wall of the exit tunnel in the center of the 70S ribosome. In Petrotoga mobilis (strain DSM 10674 / SJ95), this protein is Large ribosomal subunit protein uL22.